The sequence spans 322 residues: Sulfate adenylyltransferase subunit 2 (322 aa).

Belongs to the PAPS reductase family. CysD subfamily. As to quaternary structure, heterodimer composed of CysD, the smaller subunit, and CysN.

It carries out the reaction sulfate + ATP + H(+) = adenosine 5'-phosphosulfate + diphosphate. The protein operates within sulfur metabolism; hydrogen sulfide biosynthesis; sulfite from sulfate: step 1/3. In terms of biological role, with CysN forms the ATP sulfurylase (ATPS) that catalyzes the adenylation of sulfate producing adenosine 5'-phosphosulfate (APS) and diphosphate, the first enzymatic step in sulfur assimilation pathway. APS synthesis involves the formation of a high-energy phosphoric-sulfuric acid anhydride bond driven by GTP hydrolysis by CysN coupled to ATP hydrolysis by CysD. The polypeptide is Sulfate adenylyltransferase subunit 2 (Bradyrhizobium sp. (strain BTAi1 / ATCC BAA-1182)).